The chain runs to 241 residues: Triosephosphate isomerase (241 aa).

9 to 11 contacts substrate; sequence NWK. Histidine 96 serves as the catalytic Electrophile. Catalysis depends on glutamate 165, which acts as the Proton acceptor. Substrate is bound by residues glycine 171, serine 204, and 225–226; that span reads GG.

The protein belongs to the triosephosphate isomerase family. As to quaternary structure, homodimer.

The protein localises to the cytoplasm. The catalysed reaction is D-glyceraldehyde 3-phosphate = dihydroxyacetone phosphate. Its pathway is carbohydrate biosynthesis; gluconeogenesis. The protein operates within carbohydrate degradation; glycolysis; D-glyceraldehyde 3-phosphate from glycerone phosphate: step 1/1. Involved in the gluconeogenesis. Catalyzes stereospecifically the conversion of dihydroxyacetone phosphate (DHAP) to D-glyceraldehyde-3-phosphate (G3P). The sequence is that of Triosephosphate isomerase from Prochlorococcus marinus (strain MIT 9515).